We begin with the raw amino-acid sequence, 399 residues long: Serine/threonine transporter SstT (399 aa).

9 consecutive transmembrane segments (helical) span residues 8–28 (LSLVTKIFIAIILGFVVAFLF), 37–57 (IFGEIFIKALKAVAPILVFVL), 77–97 (ILFLYIVSMLFAAFSAVIADL), 134–154 (PVVALSEANFIGILAWAIILG), 178–198 (VIHLVISFAPIGIFGLVAVTF), 212–232 (LLLVLLGTMFFMALIVNPIMV), 284–304 (VIIPLGSTVNMCGAAITITVL), 312–332 (LGISVDIWTMLILCVVASISA), and 348–370 (VACSLFGISSDIAMQVVAIGMVI).

It belongs to the dicarboxylate/amino acid:cation symporter (DAACS) (TC 2.A.23) family.

It is found in the cell inner membrane. It catalyses the reaction L-serine(in) + Na(+)(in) = L-serine(out) + Na(+)(out). The enzyme catalyses L-threonine(in) + Na(+)(in) = L-threonine(out) + Na(+)(out). Its function is as follows. Involved in the import of serine and threonine into the cell, with the concomitant import of sodium (symport system). This is Serine/threonine transporter SstT from Acinetobacter baylyi (strain ATCC 33305 / BD413 / ADP1).